Here is a 1217-residue protein sequence, read N- to C-terminus: ATP-dependent RNA helicase DHX30 (1217 aa).

2 positions are modified to phosphoserine: aspartate 15 and serine 29. The DRBM domain maps to 76–144 (PKNLLNSVIG…QAAAAACQLF (69 aa)). Residues 176 to 223 (WWRPEPTMPPTSWRQLNPENIRPGGPAGLSRSLGREEEEDEEEELEEG) form a disordered region. Residues 211–223 (EEEEDEEEELEEG) show a composition bias toward acidic residues. 2 positions are modified to phosphoserine: serine 249 and serine 403. In terms of domain architecture, Helicase ATP-binding spans 467-635 (LSAIEQHPVV…FGGCPVIKVP (169 aa)). 480–487 (GDTGCGKT) is an ATP binding site. Residues 582–585 (DEVH) carry the DEAH box motif. Residues 677 to 850 (LVTDLVLHID…NLVLQAKIHM (174 aa)) enclose the Helicase C-terminal domain.

It belongs to the DEAD box helicase family. DEAH subfamily. Identified in a complex with TFAM and SSBP1. Interacts (via N-terminus) with ZC3HAV1 (via N-terminal domain) in an RNA-independent manner. Found in a complex with GRSF1, DDX28, FASTKD2 and FASTKD5. In terms of processing, phosphorylated on Ser-15. Expressed in the heart, brain, spleen, lung, liver, skeletal muscle, kidney, and testis. Expression is strongest in the testis and brain, while the lowest levels of expression are found in the spleen and lung.

Its subcellular location is the cytoplasm. It localises to the mitochondrion. It is found in the mitochondrion matrix. The protein localises to the mitochondrion nucleoid. It carries out the reaction ATP + H2O = ADP + phosphate + H(+). Its function is as follows. RNA-dependent helicase. Plays an important role in the assembly of the mitochondrial large ribosomal subunit. Required for optimal function of the zinc-finger antiviral protein ZC3HAV1. Associates with mitochondrial DNA. Involved in nervous system development and differentiation through its involvement in the up-regulation of a number of genes which are required for neurogenesis, including GSC, NCAM1, neurogenin, and NEUROD. The polypeptide is ATP-dependent RNA helicase DHX30 (Dhx30) (Mus musculus (Mouse)).